The primary structure comprises 739 residues: Phosphoribosylformylglycinamidine synthase subunit PurL (739 aa).

Residue His-53 is part of the active site. 2 residues coordinate ATP: Tyr-56 and Lys-95. Glu-97 contacts Mg(2+). Substrate contacts are provided by residues 98–101 and Arg-120; that span reads SHNH. The active-site Proton acceptor is His-99. Mg(2+) is bound at residue Asp-121. Gln-244 provides a ligand contact to substrate. Residue Asp-274 coordinates Mg(2+). Substrate is bound at residue 318–320; sequence ESQ. ATP is bound by residues Asp-501 and Gly-538. Asn-539 is a Mg(2+) binding site. Ser-541 provides a ligand contact to substrate.

It belongs to the FGAMS family. As to quaternary structure, monomer. Part of the FGAM synthase complex composed of 1 PurL, 1 PurQ and 2 PurS subunits.

The protein localises to the cytoplasm. The catalysed reaction is N(2)-formyl-N(1)-(5-phospho-beta-D-ribosyl)glycinamide + L-glutamine + ATP + H2O = 2-formamido-N(1)-(5-O-phospho-beta-D-ribosyl)acetamidine + L-glutamate + ADP + phosphate + H(+). It participates in purine metabolism; IMP biosynthesis via de novo pathway; 5-amino-1-(5-phospho-D-ribosyl)imidazole from N(2)-formyl-N(1)-(5-phospho-D-ribosyl)glycinamide: step 1/2. Part of the phosphoribosylformylglycinamidine synthase complex involved in the purines biosynthetic pathway. Catalyzes the ATP-dependent conversion of formylglycinamide ribonucleotide (FGAR) and glutamine to yield formylglycinamidine ribonucleotide (FGAM) and glutamate. The FGAM synthase complex is composed of three subunits. PurQ produces an ammonia molecule by converting glutamine to glutamate. PurL transfers the ammonia molecule to FGAR to form FGAM in an ATP-dependent manner. PurS interacts with PurQ and PurL and is thought to assist in the transfer of the ammonia molecule from PurQ to PurL. In Listeria monocytogenes serovar 1/2a (strain ATCC BAA-679 / EGD-e), this protein is Phosphoribosylformylglycinamidine synthase subunit PurL.